The following is a 488-amino-acid chain: Ribulose bisphosphate carboxylase large chain (488 aa).

Substrate contacts are provided by N127 and T177. The Proton acceptor role is filled by K179. K181 contacts substrate. Mg(2+) contacts are provided by K205, D207, and E208. At K205 the chain carries N6-carboxylysine. H297 (proton acceptor) is an active-site residue. R298, H330, and S382 together coordinate substrate.

This sequence belongs to the RuBisCO large chain family. Type I subfamily. In terms of assembly, heterohexadecamer of 8 large chains and 8 small chains. Requires Mg(2+) as cofactor.

The protein localises to the plastid. It localises to the chloroplast. It carries out the reaction 2 (2R)-3-phosphoglycerate + 2 H(+) = D-ribulose 1,5-bisphosphate + CO2 + H2O. It catalyses the reaction D-ribulose 1,5-bisphosphate + O2 = 2-phosphoglycolate + (2R)-3-phosphoglycerate + 2 H(+). Its function is as follows. RuBisCO catalyzes two reactions: the carboxylation of D-ribulose 1,5-bisphosphate, the primary event in carbon dioxide fixation, as well as the oxidative fragmentation of the pentose substrate in the photorespiration process. Both reactions occur simultaneously and in competition at the same active site. The polypeptide is Ribulose bisphosphate carboxylase large chain (Pyropia suborbiculata (Red alga)).